Consider the following 152-residue polypeptide: Large ribosomal subunit protein bL9 (152 aa).

The protein belongs to the bacterial ribosomal protein bL9 family.

Functionally, binds to the 23S rRNA. The polypeptide is Large ribosomal subunit protein bL9 (Prochlorococcus marinus (strain SARG / CCMP1375 / SS120)).